Here is a 262-residue protein sequence, read N- to C-terminus: Acyl-[acyl-carrier-protein]--UDP-N-acetylglucosamine O-acyltransferase (262 aa).

This sequence belongs to the transferase hexapeptide repeat family. LpxA subfamily. Homotrimer.

Its subcellular location is the cytoplasm. It carries out the reaction a (3R)-hydroxyacyl-[ACP] + UDP-N-acetyl-alpha-D-glucosamine = a UDP-3-O-[(3R)-3-hydroxyacyl]-N-acetyl-alpha-D-glucosamine + holo-[ACP]. Its pathway is glycolipid biosynthesis; lipid IV(A) biosynthesis; lipid IV(A) from (3R)-3-hydroxytetradecanoyl-[acyl-carrier-protein] and UDP-N-acetyl-alpha-D-glucosamine: step 1/6. In terms of biological role, involved in the biosynthesis of lipid A, a phosphorylated glycolipid that anchors the lipopolysaccharide to the outer membrane of the cell. The sequence is that of Acyl-[acyl-carrier-protein]--UDP-N-acetylglucosamine O-acyltransferase from Pectobacterium atrosepticum (strain SCRI 1043 / ATCC BAA-672) (Erwinia carotovora subsp. atroseptica).